Consider the following 61-residue polypeptide: KDGYIIEHRGCKYSCFFGTNSWCNTECTLKKGSSGYCAWPACWCYGLPDNVKIFDSNNLKC.

The LCN-type CS-alpha/beta domain maps to 1–61 (KDGYIIEHRG…KIFDSNNLKC (61 aa)). Disulfide bonds link cysteine 11–cysteine 61, cysteine 15–cysteine 37, cysteine 23–cysteine 42, and cysteine 27–cysteine 44.

This sequence belongs to the long (4 C-C) scorpion toxin superfamily. Sodium channel inhibitor family. Beta subfamily. In terms of tissue distribution, expressed by the venom gland.

The protein resides in the secreted. In terms of biological role, shows antibacterial activity against both Gram-positive bacteria (B.subtilis, M.luteus, E.faecalis) and Gram-negative bacteria (P.aeruginosa, Y.enterocolitica, A.calcoaceticus). Modifies membrane sodium permeability on Y.enterocolitica. Is toxic to cockroaches and crabs, but is not toxic to mice. Does not induce haemolysis in human erythrocytes. Acts by inhibiting the sodium (Nav) currents. This is Bactridin-1 from Tityus discrepans (Venezuelan scorpion).